Reading from the N-terminus, the 209-residue chain is Uracil phosphoribosyltransferase (209 aa).

5-phospho-alpha-D-ribose 1-diphosphate-binding positions include R79, R104, and 131-139 (DPMLATGGS). Residues I194 and 199–201 (GDA) contribute to the uracil site. Residue D200 coordinates 5-phospho-alpha-D-ribose 1-diphosphate.

The protein belongs to the UPRTase family. It depends on Mg(2+) as a cofactor.

The catalysed reaction is UMP + diphosphate = 5-phospho-alpha-D-ribose 1-diphosphate + uracil. It functions in the pathway pyrimidine metabolism; UMP biosynthesis via salvage pathway; UMP from uracil: step 1/1. With respect to regulation, allosterically activated by GTP. Functionally, catalyzes the conversion of uracil and 5-phospho-alpha-D-ribose 1-diphosphate (PRPP) to UMP and diphosphate. The polypeptide is Uracil phosphoribosyltransferase (Lactobacillus gasseri (strain ATCC 33323 / DSM 20243 / BCRC 14619 / CIP 102991 / JCM 1131 / KCTC 3163 / NCIMB 11718 / NCTC 13722 / AM63)).